A 348-amino-acid chain; its full sequence is Dihydroorotase (348 aa).

Zn(2+) is bound by residues histidine 17 and histidine 19. Substrate contacts are provided by residues 19–21 (HLR) and asparagine 45. Zn(2+) contacts are provided by lysine 103, histidine 140, and histidine 178. Position 103 is an N6-carboxylysine (lysine 103). Residue histidine 140 participates in substrate binding. Leucine 223 contributes to the substrate binding site. Aspartate 251 serves as a coordination point for Zn(2+). The active site involves aspartate 251. Positions 255 and 267 each coordinate substrate.

Belongs to the metallo-dependent hydrolases superfamily. DHOase family. Class II DHOase subfamily. Homodimer. Zn(2+) serves as cofactor.

It catalyses the reaction (S)-dihydroorotate + H2O = N-carbamoyl-L-aspartate + H(+). Its pathway is pyrimidine metabolism; UMP biosynthesis via de novo pathway; (S)-dihydroorotate from bicarbonate: step 3/3. In terms of biological role, catalyzes the reversible cyclization of carbamoyl aspartate to dihydroorotate. The sequence is that of Dihydroorotase from Escherichia fergusonii (strain ATCC 35469 / DSM 13698 / CCUG 18766 / IAM 14443 / JCM 21226 / LMG 7866 / NBRC 102419 / NCTC 12128 / CDC 0568-73).